The chain runs to 169 residues: Allophycocyanin subunit beta-18 (169 aa).

Asn72 bears the N4-methylasparagine mark. Cys82 is a binding site for (2R,3E)-phycocyanobilin.

The protein belongs to the phycobiliprotein family. As to quaternary structure, heterodimer of an alpha and a beta chain. In terms of processing, contains one covalently linked phycocyanobilin chromophore.

It is found in the plastid. The protein localises to the cyanelle thylakoid membrane. Functionally, light-harvesting photosynthetic bile pigment-protein from the phycobiliprotein complex. Allophycocyanin has a maximum absorption at approximately 650 nanometers. The sequence is that of Allophycocyanin subunit beta-18 (apcF) from Cyanophora paradoxa.